A 649-amino-acid polypeptide reads, in one-letter code: Glycerol-3-phosphate dehydrogenase, mitochondrial (649 aa).

Residue 69-97 participates in FAD binding; sequence DVLIIGGGATGTGCALDAATRGLNVALVE.

This sequence belongs to the FAD-dependent glycerol-3-phosphate dehydrogenase family. The cofactor is FAD.

The protein localises to the mitochondrion inner membrane. Its subcellular location is the mitochondrion intermembrane space. It carries out the reaction a quinone + sn-glycerol 3-phosphate = dihydroxyacetone phosphate + a quinol. It participates in polyol metabolism; glycerol degradation via glycerol kinase pathway; glycerone phosphate from sn-glycerol 3-phosphate (anaerobic route): step 1/1. This is Glycerol-3-phosphate dehydrogenase, mitochondrial (GUT2) from Saccharomyces cerevisiae (strain ATCC 204508 / S288c) (Baker's yeast).